The primary structure comprises 325 residues: Beta-ketoacyl-[acyl-carrier-protein] synthase III (325 aa).

Catalysis depends on residues cysteine 119 and histidine 252. The ACP-binding stretch occupies residues 253-257 (QANIR). Residue asparagine 282 is part of the active site.

It belongs to the thiolase-like superfamily. FabH family. In terms of assembly, homodimer.

Its subcellular location is the cytoplasm. It catalyses the reaction malonyl-[ACP] + acetyl-CoA + H(+) = 3-oxobutanoyl-[ACP] + CO2 + CoA. The protein operates within lipid metabolism; fatty acid biosynthesis. In terms of biological role, catalyzes the condensation reaction of fatty acid synthesis by the addition to an acyl acceptor of two carbons from malonyl-ACP. Catalyzes the first condensation reaction which initiates fatty acid synthesis and may therefore play a role in governing the total rate of fatty acid production. Possesses both acetoacetyl-ACP synthase and acetyl transacylase activities. Its substrate specificity determines the biosynthesis of branched-chain and/or straight-chain of fatty acids. This Delftia acidovorans (strain DSM 14801 / SPH-1) protein is Beta-ketoacyl-[acyl-carrier-protein] synthase III.